The chain runs to 305 residues: Coiled-coil domain-containing protein 69 (305 aa).

The N-myristoyl glycine moiety is linked to residue glycine 2. Residues 13 to 41 (LRKKKRQKAHQEGLTSKELNDLNAKSQEP) form a disordered region. Coiled-coil stretches lie at residues 42–167 (NELL…SVLS) and 216–278 (MERN…KEQN).

The protein belongs to the CCDC69 family.

It is found in the cytoplasm. Its subcellular location is the cytoskeleton. The protein resides in the spindle. The protein localises to the midbody. Its function is as follows. May act as a scaffold to regulate the recruitment and assembly of spindle midzone components. The polypeptide is Coiled-coil domain-containing protein 69 (ccdc69) (Xenopus tropicalis (Western clawed frog)).